The primary structure comprises 615 residues: Putative DNA ligase 205R (615 aa).

Lys101 serves as the catalytic N6-AMP-lysine intermediate.

It belongs to the NAD-dependent DNA ligase family.

The catalysed reaction is NAD(+) + (deoxyribonucleotide)n-3'-hydroxyl + 5'-phospho-(deoxyribonucleotide)m = (deoxyribonucleotide)n+m + AMP + beta-nicotinamide D-nucleotide.. Functionally, catalyzes the formation of phosphodiester linkages between 5'-phosphoryl and 3'-hydroxyl groups in double-stranded DNA using NAD as a coenzyme and as the energy source for the reaction. This chain is Putative DNA ligase 205R, found in Invertebrate iridescent virus 6 (IIV-6).